The chain runs to 170 residues: Zinc finger protein 576 (170 aa).

The tract at residues 1-29 is disordered; it reads MEDPNPEENMKQQDSPKERSPQSPGGNIC. Basic and acidic residues predominate over residues 8–20; the sequence is ENMKQQDSPKERS. C2H2-type zinc fingers lie at residues 34 to 57, 71 to 93, 112 to 134, and 143 to 165; these read PKCTRCLITFADSKFQERHMKREH, FICFTCARSFPSSKALITHQRSH, FPCPDCGKTFGQAVSLRRHRQMH, and FACTECGQDFAQEAGLHQHYIRH.

Belongs to the krueppel C2H2-type zinc-finger protein family.

It localises to the nucleus. May be involved in transcriptional regulation. The sequence is that of Zinc finger protein 576 (ZNF576) from Homo sapiens (Human).